A 334-amino-acid chain; its full sequence is Biotin synthase (334 aa).

Residues 55-280 form the Radical SAM core domain; it reads EEIEVEGIIS…HTMLRFAGGR (226 aa). [4Fe-4S] cluster contacts are provided by C70, C74, and C77. [2Fe-2S] cluster is bound by residues C113, C205, and R275.

Belongs to the radical SAM superfamily. Biotin synthase family. As to quaternary structure, homodimer. [4Fe-4S] cluster is required as a cofactor. [2Fe-2S] cluster serves as cofactor.

It catalyses the reaction (4R,5S)-dethiobiotin + (sulfur carrier)-SH + 2 reduced [2Fe-2S]-[ferredoxin] + 2 S-adenosyl-L-methionine = (sulfur carrier)-H + biotin + 2 5'-deoxyadenosine + 2 L-methionine + 2 oxidized [2Fe-2S]-[ferredoxin]. The protein operates within cofactor biosynthesis; biotin biosynthesis; biotin from 7,8-diaminononanoate: step 2/2. Functionally, catalyzes the conversion of dethiobiotin (DTB) to biotin by the insertion of a sulfur atom into dethiobiotin via a radical-based mechanism. This chain is Biotin synthase, found in Corynebacterium glutamicum (strain ATCC 13032 / DSM 20300 / JCM 1318 / BCRC 11384 / CCUG 27702 / LMG 3730 / NBRC 12168 / NCIMB 10025 / NRRL B-2784 / 534).